A 374-amino-acid polypeptide reads, in one-letter code: Homoserine O-succinyltransferase (374 aa).

The region spanning 47–357 is the AB hydrolase-1 domain; sequence NAILVCHALS…NFGHDSFLME (311 aa). Ser-153 functions as the Nucleophile in the catalytic mechanism. Position 223 (Arg-223) interacts with substrate. Residues Asp-318 and His-351 contribute to the active site. Substrate is bound at residue Asp-352.

The protein belongs to the AB hydrolase superfamily. MetX family. Homodimer.

Its subcellular location is the cytoplasm. It catalyses the reaction L-homoserine + succinyl-CoA = O-succinyl-L-homoserine + CoA. The protein operates within amino-acid biosynthesis; L-methionine biosynthesis via de novo pathway; O-succinyl-L-homoserine from L-homoserine: step 1/1. Its function is as follows. Transfers a succinyl group from succinyl-CoA to L-homoserine, forming succinyl-L-homoserine. This is Homoserine O-succinyltransferase from Dechloromonas aromatica (strain RCB).